A 325-amino-acid polypeptide reads, in one-letter code: GTP 3',8-cyclase (325 aa).

The region spanning 4-219 is the Radical SAM core domain; that stretch reads TYQREINYLR…DAISAKLGPL (216 aa). Arginine 13 serves as a coordination point for GTP. [4Fe-4S] cluster is bound by residues cysteine 20 and cysteine 24. Residue tyrosine 26 coordinates S-adenosyl-L-methionine. Position 27 (cysteine 27) interacts with [4Fe-4S] cluster. Arginine 63 contacts GTP. Glycine 67 lines the S-adenosyl-L-methionine pocket. Threonine 94 contacts GTP. Residue serine 118 coordinates S-adenosyl-L-methionine. Residue lysine 155 coordinates GTP. Position 189 (methionine 189) interacts with S-adenosyl-L-methionine. Positions 254 and 257 each coordinate [4Fe-4S] cluster. 259-261 contacts GTP; sequence RLR. A [4Fe-4S] cluster-binding site is contributed by cysteine 271.

Belongs to the radical SAM superfamily. MoaA family. In terms of assembly, monomer and homodimer. [4Fe-4S] cluster is required as a cofactor.

It carries out the reaction GTP + AH2 + S-adenosyl-L-methionine = (8S)-3',8-cyclo-7,8-dihydroguanosine 5'-triphosphate + 5'-deoxyadenosine + L-methionine + A + H(+). It participates in cofactor biosynthesis; molybdopterin biosynthesis. Functionally, catalyzes the cyclization of GTP to (8S)-3',8-cyclo-7,8-dihydroguanosine 5'-triphosphate. The chain is GTP 3',8-cyclase from Pelotomaculum thermopropionicum (strain DSM 13744 / JCM 10971 / SI).